Here is a 487-residue protein sequence, read N- to C-terminus: Protein nucleotidyltransferase YdiU (487 aa).

Residues glycine 90, glycine 92, arginine 93, lysine 113, aspartate 125, glycine 126, arginine 176, and arginine 183 each contribute to the ATP site. The Proton acceptor role is filled by aspartate 252. Positions 253 and 262 each coordinate Mg(2+). Aspartate 262 contacts ATP.

It belongs to the SELO family. The cofactor is Mg(2+). Mn(2+) is required as a cofactor.

It carries out the reaction L-seryl-[protein] + ATP = 3-O-(5'-adenylyl)-L-seryl-[protein] + diphosphate. The enzyme catalyses L-threonyl-[protein] + ATP = 3-O-(5'-adenylyl)-L-threonyl-[protein] + diphosphate. It catalyses the reaction L-tyrosyl-[protein] + ATP = O-(5'-adenylyl)-L-tyrosyl-[protein] + diphosphate. The catalysed reaction is L-histidyl-[protein] + UTP = N(tele)-(5'-uridylyl)-L-histidyl-[protein] + diphosphate. It carries out the reaction L-seryl-[protein] + UTP = O-(5'-uridylyl)-L-seryl-[protein] + diphosphate. The enzyme catalyses L-tyrosyl-[protein] + UTP = O-(5'-uridylyl)-L-tyrosyl-[protein] + diphosphate. In terms of biological role, nucleotidyltransferase involved in the post-translational modification of proteins. It can catalyze the addition of adenosine monophosphate (AMP) or uridine monophosphate (UMP) to a protein, resulting in modifications known as AMPylation and UMPylation. This Pseudomonas savastanoi pv. phaseolicola (strain 1448A / Race 6) (Pseudomonas syringae pv. phaseolicola (strain 1448A / Race 6)) protein is Protein nucleotidyltransferase YdiU.